Consider the following 123-residue polypeptide: Mediator of RNA polymerase II transcription subunit 9 (123 aa).

Residues 95 to 123 adopt a coiled-coil conformation; it reads WQLHIQEKKIELEKKTKHLQRLRESIQKQ.

Belongs to the Mediator complex subunit 9 family. As to quaternary structure, component of the Mediator complex.

It is found in the nucleus. Functionally, component of the Mediator complex, a coactivator involved in the regulated transcription of nearly all RNA polymerase II-dependent genes. Mediator functions as a bridge to convey information from gene-specific regulatory proteins to the basal RNA polymerase II transcription machinery. Mediator is recruited to promoters by direct interactions with regulatory proteins and serves as a scaffold for the assembly of a functional preinitiation complex with RNA polymerase II and the general transcription factors. The polypeptide is Mediator of RNA polymerase II transcription subunit 9 (CSE2) (Kluyveromyces lactis (strain ATCC 8585 / CBS 2359 / DSM 70799 / NBRC 1267 / NRRL Y-1140 / WM37) (Yeast)).